A 490-amino-acid chain; its full sequence is MTTMPNWLKQRAFLTPERIAVSDGRRTKTFAELYEAAAVWARRLAQAGVKEGDIVALLMKNRIEMIEIIHALFFLGARVLLQNVRLTSYELGWQLDDSGARLAIADEELAGSLDGDGRVLTVGAVAALPEVDVSLKETCDLEEVATIMYTSGTTGTPKGVLQTYGNHWWSAVGSALNLGLHERDCWLAAVPLFHISGLSIAMRSVIYGMPMRLQTSFDPKEANEWIMRGDVTIMSVVAAMLQRMVAELGEARYPDTFRCMLLGGGPAPRPLLEACKEKGIPVYQTYGMTETASQIATLAPEYSLTKLGSAGKPLFPAELCILKDGKPAAPHEAGEIVVKGPNVTKGYWQRPEATAQAIRGGWFFTGDIGYLDEDGFLYVLDRRSDLIISGGENVYPAEVEAVLLSHPDVEEAGVTGVENETWGQVPYAFVRLKRGASPDEAALRAFCRERLAKYKVPARIYFVDELPRNAAQKLLRRELKRLIPKTEQTF.

It belongs to the ATP-dependent AMP-binding enzyme family. MenE subfamily.

It carries out the reaction 2-succinylbenzoate + ATP + CoA = 2-succinylbenzoyl-CoA + AMP + diphosphate. It functions in the pathway quinol/quinone metabolism; 1,4-dihydroxy-2-naphthoate biosynthesis; 1,4-dihydroxy-2-naphthoate from chorismate: step 5/7. The protein operates within quinol/quinone metabolism; menaquinone biosynthesis. Its function is as follows. Converts 2-succinylbenzoate (OSB) to 2-succinylbenzoyl-CoA (OSB-CoA). This is 2-succinylbenzoate--CoA ligase from Geobacillus kaustophilus (strain HTA426).